The following is a 130-amino-acid chain: Small ribosomal subunit protein uS9 (130 aa).

Residues 98 to 130 form a disordered region; that stretch reads LKKAGMLTRDPRMKERKKYGLKKARKASQFSKR. The segment covering 111-130 has biased composition (basic residues); it reads KERKKYGLKKARKASQFSKR.

This sequence belongs to the universal ribosomal protein uS9 family.

The protein is Small ribosomal subunit protein uS9 of Lacticaseibacillus casei (strain BL23) (Lactobacillus casei).